Here is a 128-residue protein sequence, read N- to C-terminus: Cytochrome c-type biogenesis protein CcmE (128 aa).

Residues Met1–Arg8 lie on the Cytoplasmic side of the membrane. Residues Leu9–Asn29 form a helical; Signal-anchor for type II membrane protein membrane-spanning segment. Over Leu30–Ser128 the chain is Periplasmic. The heme site is built by His120 and Tyr124.

It belongs to the CcmE/CycJ family.

The protein resides in the cell inner membrane. Its function is as follows. Heme chaperone required for the biogenesis of c-type cytochromes. Transiently binds heme delivered by CcmC and transfers the heme to apo-cytochromes in a process facilitated by CcmF and CcmH. This chain is Cytochrome c-type biogenesis protein CcmE, found in Rickettsia felis (strain ATCC VR-1525 / URRWXCal2) (Rickettsia azadi).